Here is a 507-residue protein sequence, read N- to C-terminus: Putative F-box/LRR-repeat protein At4g00320 (507 aa).

An F-box domain is found at 12-60; the sequence is RDGISGLPDAMICHILSFLPTKVAASTTVLAKRWKPLLAFMPNLDFDES. LRR repeat units lie at residues 135 to 163, 187 to 212, 214 to 240, 317 to 348, and 349 to 374; these read RGFG…KIQF, YVKM…LLMN, IWKE…KFSR, ILYL…TIRT, and GVHI…VFEG.

The polypeptide is Putative F-box/LRR-repeat protein At4g00320 (Arabidopsis thaliana (Mouse-ear cress)).